The sequence spans 704 residues: Ribosomal RNA large subunit methyltransferase K/L (704 aa).

Residues 43–154 form the THUMP domain; it reads TMYQSLLWSR…KEKASLSLDL (112 aa).

It belongs to the methyltransferase superfamily. RlmKL family.

The protein localises to the cytoplasm. It catalyses the reaction guanosine(2445) in 23S rRNA + S-adenosyl-L-methionine = N(2)-methylguanosine(2445) in 23S rRNA + S-adenosyl-L-homocysteine + H(+). The enzyme catalyses guanosine(2069) in 23S rRNA + S-adenosyl-L-methionine = N(2)-methylguanosine(2069) in 23S rRNA + S-adenosyl-L-homocysteine + H(+). Its function is as follows. Specifically methylates the guanine in position 2445 (m2G2445) and the guanine in position 2069 (m7G2069) of 23S rRNA. The polypeptide is Ribosomal RNA large subunit methyltransferase K/L (Proteus mirabilis (strain HI4320)).